Reading from the N-terminus, the 95-residue chain is Cerebratulus toxin A-III (95 aa).

3 disulfides stabilise this stretch: Cys-17–Cys-38, Cys-23–Cys-34, and Cys-48–Cys-61.

It belongs to the worm cytolysin family.

The protein resides in the secreted. In terms of biological role, permeabilizes a variety of cells. Forms large pores which allows the release of large proteins almost as rapidly as small organic molecules and inorganic ions. At sublytic concentrations, the toxin also inhibits protein kinase C and endogenous voltage-gated cation selective (sodium, calcium) channels occurring in the nervous and cardiovascular systems. This chain is Cerebratulus toxin A-III, found in Cerebratulus lacteus (Milky ribbon worm).